A 373-amino-acid polypeptide reads, in one-letter code: Anhydro-N-acetylmuramic acid kinase (373 aa).

12–19 (GTSLDGVD) contributes to the ATP binding site.

The protein belongs to the anhydro-N-acetylmuramic acid kinase family.

The catalysed reaction is 1,6-anhydro-N-acetyl-beta-muramate + ATP + H2O = N-acetyl-D-muramate 6-phosphate + ADP + H(+). Its pathway is amino-sugar metabolism; 1,6-anhydro-N-acetylmuramate degradation. The protein operates within cell wall biogenesis; peptidoglycan recycling. In terms of biological role, catalyzes the specific phosphorylation of 1,6-anhydro-N-acetylmuramic acid (anhMurNAc) with the simultaneous cleavage of the 1,6-anhydro ring, generating MurNAc-6-P. Is required for the utilization of anhMurNAc either imported from the medium or derived from its own cell wall murein, and thus plays a role in cell wall recycling. In Salmonella agona (strain SL483), this protein is Anhydro-N-acetylmuramic acid kinase.